Here is a 257-residue protein sequence, read N- to C-terminus: Leucine-rich repeat-containing protein 3 (257 aa).

The N-terminal stretch at 1 to 32 is a signal peptide; the sequence is MGPRGRQSPSATLAPSQGSCFFILFCLRLGAS. Residues 33–64 form the LRRNT domain; it reads CPQACQCPDHAGAVAVHCSSRGLQEIPRDIPA. 3 LRR repeats span residues 65 to 86, 89 to 110, and 114 to 135; these read DTVLLKLDANRISRVPNGAFQH, QLRELDLSHNAIEAIGPAAFSG, and GLRLLDLSHNRIRRIPKDALGK. One can recognise an LRRCT domain in the interval 145 to 198; the sequence is NPLHCECALQEALWELKLDPDSVDEIACHTSAQEQFVGKPLIQVLDSGASFCST. The chain crosses the membrane as a helical span at residues 205–225; that stretch reads VAMLVTMFGWFTMVIAYVVYY.

It belongs to the LRRC3 family.

The protein localises to the membrane. The protein is Leucine-rich repeat-containing protein 3 (Lrrc3) of Mus musculus (Mouse).